The chain runs to 395 residues: Chalcone synthase 1 (395 aa).

Val-2 carries the N-acetylvaline modification. Residue Cys-169 is part of the active site.

The protein belongs to the thiolase-like superfamily. Chalcone/stilbene synthases family.

The catalysed reaction is (E)-4-coumaroyl-CoA + 3 malonyl-CoA + 3 H(+) = 2',4,4',6'-tetrahydroxychalcone + 3 CO2 + 4 CoA. It participates in secondary metabolite biosynthesis; flavonoid biosynthesis. Its function is as follows. The primary product of this enzyme is 4,2',4',6'-tetrahydroxychalcone (also termed naringenin-chalcone or chalcone) which can under specific conditions spontaneously isomerize into naringenin. The chain is Chalcone synthase 1 (CHS1) from Sinapis alba (White mustard).